A 457-amino-acid chain; its full sequence is Phosphoglucosamine mutase (457 aa).

Catalysis depends on serine 103, which acts as the Phosphoserine intermediate. Mg(2+)-binding residues include serine 103, aspartate 244, aspartate 246, and aspartate 248. A Phosphoserine modification is found at serine 103.

It belongs to the phosphohexose mutase family. The cofactor is Mg(2+). Activated by phosphorylation.

The catalysed reaction is alpha-D-glucosamine 1-phosphate = D-glucosamine 6-phosphate. Functionally, catalyzes the conversion of glucosamine-6-phosphate to glucosamine-1-phosphate. The chain is Phosphoglucosamine mutase from Granulibacter bethesdensis (strain ATCC BAA-1260 / CGDNIH1).